The following is a 210-amino-acid chain: 2,3-bisphosphoglycerate-dependent phosphoglycerate mutase (210 aa).

Substrate-binding positions include 9–16, 22–23, R61, 88–91, K99, 115–116, and 159–160; these read RHGQSEWN, TG, ERDY, RR, and GN. H10 acts as the Tele-phosphohistidine intermediate in catalysis. E88 acts as the Proton donor/acceptor in catalysis.

The protein belongs to the phosphoglycerate mutase family. BPG-dependent PGAM subfamily. As to quaternary structure, homodimer.

It carries out the reaction (2R)-2-phosphoglycerate = (2R)-3-phosphoglycerate. It functions in the pathway carbohydrate degradation; glycolysis; pyruvate from D-glyceraldehyde 3-phosphate: step 3/5. Functionally, catalyzes the interconversion of 2-phosphoglycerate and 3-phosphoglycerate. This is 2,3-bisphosphoglycerate-dependent phosphoglycerate mutase from Parvibaculum lavamentivorans (strain DS-1 / DSM 13023 / NCIMB 13966).